The following is a 478-amino-acid chain: Zinc finger C3HC-type protein 1-like (478 aa).

A C3HC-type zinc finger spans residues 93 to 147 (CAKYGWSNIECDMLKCSSCNAYLCASLQPVLDFSKYKQRCVELQEALRKAHEKFC). Residues 285-389 (LSAPNTPVSP…SSSSDTSPRG (105 aa)) are disordered. Residues 351-363 (SMGQGESSGLSNE) show a composition bias toward polar residues. Positions 377-388 (LCSSSSSDTSPR) are enriched in low complexity.

In terms of processing, phosphorylated. May also be weakly phosphorylated on Tyr residues.

It localises to the nucleus. The protein localises to the nucleus envelope. Functionally, required for proper positioning of a substantial amount of TPR at the nuclear basket (NB) through interaction with TPR. This is Zinc finger C3HC-type protein 1-like (zc3hc1) from Xenopus tropicalis (Western clawed frog).